The chain runs to 245 residues: Phycocyanobilin:ferredoxin oxidoreductase (245 aa).

The protein belongs to the HY2 family.

The enzyme catalyses (2R,3Z)-phycocyanobilin + 4 oxidized [2Fe-2S]-[ferredoxin] = biliverdin IXalpha + 4 reduced [2Fe-2S]-[ferredoxin] + 4 H(+). Its function is as follows. Catalyzes the four-electron reduction of biliverdin IX-alpha (2-electron reduction at both the A and D rings); the reaction proceeds via an isolatable 2-electron intermediate, 181,182-dihydrobiliverdin. The chain is Phycocyanobilin:ferredoxin oxidoreductase from Gloeothece citriformis (strain PCC 7424) (Cyanothece sp. (strain PCC 7424)).